The sequence spans 328 residues: Malate dehydrogenase (328 aa).

13-19 is an NAD(+) binding site; that stretch reads GGTGQIA. Residues arginine 94 and arginine 100 each coordinate substrate. Residues asparagine 107, glutamine 114, and 131–133 contribute to the NAD(+) site; that span reads VGN. Residues asparagine 133 and arginine 164 each contribute to the substrate site. Histidine 189 serves as the catalytic Proton acceptor.

The protein belongs to the LDH/MDH superfamily. MDH type 2 family.

The enzyme catalyses (S)-malate + NAD(+) = oxaloacetate + NADH + H(+). In terms of biological role, catalyzes the reversible oxidation of malate to oxaloacetate. The sequence is that of Malate dehydrogenase from Chlamydia felis (strain Fe/C-56) (Chlamydophila felis).